We begin with the raw amino-acid sequence, 307 residues long: Elongation factor Ts (307 aa).

The tract at residues 80–83 (TDFV) is involved in Mg(2+) ion dislocation from EF-Tu.

Belongs to the EF-Ts family.

Its subcellular location is the cytoplasm. In terms of biological role, associates with the EF-Tu.GDP complex and induces the exchange of GDP to GTP. It remains bound to the aminoacyl-tRNA.EF-Tu.GTP complex up to the GTP hydrolysis stage on the ribosome. The chain is Elongation factor Ts from Azorhizobium caulinodans (strain ATCC 43989 / DSM 5975 / JCM 20966 / LMG 6465 / NBRC 14845 / NCIMB 13405 / ORS 571).